The chain runs to 567 residues: Urease subunit alpha (567 aa).

Ni(2+)-binding residues include histidine 134, histidine 136, and lysine 217. An N6-carboxylysine modification is found at lysine 217. Substrate is bound at residue histidine 219. Residues histidine 246 and histidine 272 each coordinate Ni(2+). Residue histidine 320 is the Proton donor of the active site. Aspartate 360 provides a ligand contact to Ni(2+).

Belongs to the metallo-dependent hydrolases superfamily. Urease alpha subunit family. In terms of assembly, heterotrimer of UreA (gamma), UreB (beta) and UreC (alpha) subunits. Three heterotrimers associate to form the active enzyme. Ni cation serves as cofactor. Post-translationally, carboxylation allows a single lysine to coordinate two nickel ions.

The protein resides in the cytoplasm. The catalysed reaction is urea + 2 H2O + H(+) = hydrogencarbonate + 2 NH4(+). It functions in the pathway nitrogen metabolism; urea degradation; CO(2) and NH(3) from urea (urease route): step 1/1. The protein is Urease subunit alpha of Pseudomonas putida (strain GB-1).